The chain runs to 323 residues: Methionyl-tRNA formyltransferase (323 aa).

121-124 (SLLP) contributes to the (6S)-5,6,7,8-tetrahydrofolate binding site.

This sequence belongs to the Fmt family.

The enzyme catalyses L-methionyl-tRNA(fMet) + (6R)-10-formyltetrahydrofolate = N-formyl-L-methionyl-tRNA(fMet) + (6S)-5,6,7,8-tetrahydrofolate + H(+). Functionally, attaches a formyl group to the free amino group of methionyl-tRNA(fMet). The formyl group appears to play a dual role in the initiator identity of N-formylmethionyl-tRNA by promoting its recognition by IF2 and preventing the misappropriation of this tRNA by the elongation apparatus. The sequence is that of Methionyl-tRNA formyltransferase from Desulfotalea psychrophila (strain LSv54 / DSM 12343).